The following is a 647-amino-acid chain: Threonine--tRNA ligase (647 aa).

In terms of domain architecture, TGS spans 1–61 (MIKITFPDGA…EEDGSIEIVT (61 aa)). The tract at residues 240–538 (DHRKLGKELD…LIETYKGAFP (299 aa)) is catalytic. Zn(2+) contacts are provided by C334, H385, and H515.

Belongs to the class-II aminoacyl-tRNA synthetase family. In terms of assembly, homodimer. Zn(2+) serves as cofactor.

Its subcellular location is the cytoplasm. It catalyses the reaction tRNA(Thr) + L-threonine + ATP = L-threonyl-tRNA(Thr) + AMP + diphosphate + H(+). Catalyzes the attachment of threonine to tRNA(Thr) in a two-step reaction: L-threonine is first activated by ATP to form Thr-AMP and then transferred to the acceptor end of tRNA(Thr). Also edits incorrectly charged L-seryl-tRNA(Thr). This is Threonine--tRNA ligase from Streptococcus pyogenes serotype M1.